A 361-amino-acid polypeptide reads, in one-letter code: MLLELARWLQQLESLFGLFNYLTFRGILAALTALFLSLWMGPAVIRKLAQFKGGQPIRQDGPQTHFSKAGTPTMGGSLILLTVTLSVLLWGDLRNRYVWLVLAVMICFGAIGWYDDWIKIVRRDPNGLKSRWKYLLQSIFGLAAGLFLYYTADVPAAITFYIPMFKSIALPLVGVSFVVIAYFWIVGFSNAVNLTDGLDGLAIMPTVLVACALGVFAYASGNVVFAEYLKIPLIPGAGELIIICSAIAGAGLGFLWFNTYPAMVFMGDIGALSLGAVLGTIAVIVRQEMVLVIMGGVFVIETLSVIIQVASFKLTGKRVFRMAPIHHHFELKGWPEPRVIVRFWIISVVLVLIGLATLKVR.

10 consecutive transmembrane segments (helical) span residues 25–45 (RGILAALTALFLSLWMGPAVI), 73–93 (TMGGSLILLTVTLSVLLWGDL), 98–118 (VWLVLAVMICFGAIGWYDDWI), 139–159 (IFGLAAGLFLYYTADVPAAIT), 168–188 (IALPLVGVSFVVIAYFWIVGF), 200–220 (GLAIMPTVLVACALGVFAYAS), 237–257 (AGELIIICSAIAGAGLGFLWF), 264–284 (VFMGDIGALSLGAVLGTIAVI), 289–309 (MVLVIMGGVFVIETLSVIIQV), and 339–359 (VIVRFWIISVVLVLIGLATLK).

The protein belongs to the glycosyltransferase 4 family. MraY subfamily. Mg(2+) serves as cofactor.

The protein resides in the cell inner membrane. The catalysed reaction is UDP-N-acetyl-alpha-D-muramoyl-L-alanyl-gamma-D-glutamyl-meso-2,6-diaminopimeloyl-D-alanyl-D-alanine + di-trans,octa-cis-undecaprenyl phosphate = di-trans,octa-cis-undecaprenyl diphospho-N-acetyl-alpha-D-muramoyl-L-alanyl-D-glutamyl-meso-2,6-diaminopimeloyl-D-alanyl-D-alanine + UMP. It functions in the pathway cell wall biogenesis; peptidoglycan biosynthesis. Its function is as follows. Catalyzes the initial step of the lipid cycle reactions in the biosynthesis of the cell wall peptidoglycan: transfers peptidoglycan precursor phospho-MurNAc-pentapeptide from UDP-MurNAc-pentapeptide onto the lipid carrier undecaprenyl phosphate, yielding undecaprenyl-pyrophosphoryl-MurNAc-pentapeptide, known as lipid I. The chain is Phospho-N-acetylmuramoyl-pentapeptide-transferase from Xanthomonas oryzae pv. oryzae (strain MAFF 311018).